The sequence spans 671 residues: Acetyl-coenzyme A synthetase 1 (671 aa).

CoA contacts are provided by residues R210 to K213 and T329. Residues G405–P407, D429–T434, D520, and R535 each bind ATP. S543 serves as a coordination point for CoA. R546 provides a ligand contact to ATP. R605 serves as a coordination point for CoA.

Belongs to the ATP-dependent AMP-binding enzyme family.

It carries out the reaction acetate + ATP + CoA = acetyl-CoA + AMP + diphosphate. The chain is Acetyl-coenzyme A synthetase 1 (ACS1) from Debaryomyces hansenii (strain ATCC 36239 / CBS 767 / BCRC 21394 / JCM 1990 / NBRC 0083 / IGC 2968) (Yeast).